The sequence spans 252 residues: Probable transcriptional regulatory protein TW504 (252 aa).

Belongs to the TACO1 family.

Its subcellular location is the cytoplasm. The sequence is that of Probable transcriptional regulatory protein TW504 from Tropheryma whipplei (strain TW08/27) (Whipple's bacillus).